Here is a 151-residue protein sequence, read N- to C-terminus: Metallothiol transferase FosB (151 aa).

The VOC domain occupies 4–119; sequence SINHVTYSVS…DGHKFELHTG (116 aa). Residues H7, H66, and E115 each coordinate Mg(2+). E115 functions as the Proton donor/acceptor in the catalytic mechanism.

This sequence belongs to the fosfomycin resistance protein family. FosB subfamily. In terms of assembly, homodimer. It depends on Mg(2+) as a cofactor.

It localises to the cytoplasm. Functionally, metallothiol transferase which confers resistance to fosfomycin by catalyzing the addition of a thiol cofactor to fosfomycin. L-cysteine is probably the physiological thiol donor. The polypeptide is Metallothiol transferase FosB (Staphylococcus saprophyticus subsp. saprophyticus (strain ATCC 15305 / DSM 20229 / NCIMB 8711 / NCTC 7292 / S-41)).